A 124-amino-acid chain; its full sequence is Fluoride-specific ion channel FluC 1 (124 aa).

Transmembrane regions (helical) follow at residues 4 to 24 (VLIG…GAWI), 36 to 56 (GTFA…GLVV), 67 to 87 (VVLG…LLDL), and 103 to 123 (AALS…LGWG). Residues Gly-75 and Thr-78 each coordinate Na(+).

The protein belongs to the fluoride channel Fluc/FEX (TC 1.A.43) family.

Its subcellular location is the cell membrane. The enzyme catalyses fluoride(in) = fluoride(out). Na(+) is not transported, but it plays an essential structural role and its presence is essential for fluoride channel function. Fluoride-specific ion channel. Important for reducing fluoride concentration in the cell, thus reducing its toxicity. The sequence is that of Fluoride-specific ion channel FluC 1 from Symbiobacterium thermophilum (strain DSM 24528 / JCM 14929 / IAM 14863 / T).